The primary structure comprises 143 residues: MAKKITAYIKLQVKAAQANPSPPVGPALGQHGVNIMEFCKAFNARTQGLEAGLPTPVIITVYSDRSFTFETKSTPASVLLKKAAGLTSGSARPNTVKVGTVTRAQLEEIAKTKNADLTAADMDAAVRTIAGSARSMGLNVEGV.

The protein belongs to the universal ribosomal protein uL11 family. In terms of assembly, part of the ribosomal stalk of the 50S ribosomal subunit. Interacts with L10 and the large rRNA to form the base of the stalk. L10 forms an elongated spine to which L12 dimers bind in a sequential fashion forming a multimeric L10(L12)X complex. Post-translationally, one or more lysine residues are methylated.

Functionally, forms part of the ribosomal stalk which helps the ribosome interact with GTP-bound translation factors. The polypeptide is Large ribosomal subunit protein uL11 (Pseudomonas fluorescens (strain Pf0-1)).